The sequence spans 250 residues: Ubiquinone/menaquinone biosynthesis C-methyltransferase UbiE (250 aa).

S-adenosyl-L-methionine-binding positions include T73, D94, N122 to A123, and S139.

It belongs to the class I-like SAM-binding methyltransferase superfamily. MenG/UbiE family.

It catalyses the reaction a 2-demethylmenaquinol + S-adenosyl-L-methionine = a menaquinol + S-adenosyl-L-homocysteine + H(+). The catalysed reaction is a 2-methoxy-6-(all-trans-polyprenyl)benzene-1,4-diol + S-adenosyl-L-methionine = a 5-methoxy-2-methyl-3-(all-trans-polyprenyl)benzene-1,4-diol + S-adenosyl-L-homocysteine + H(+). The protein operates within quinol/quinone metabolism; menaquinone biosynthesis; menaquinol from 1,4-dihydroxy-2-naphthoate: step 2/2. It participates in cofactor biosynthesis; ubiquinone biosynthesis. Functionally, methyltransferase required for the conversion of demethylmenaquinol (DMKH2) to menaquinol (MKH2) and the conversion of 2-polyprenyl-6-methoxy-1,4-benzoquinol (DDMQH2) to 2-polyprenyl-3-methyl-6-methoxy-1,4-benzoquinol (DMQH2). This is Ubiquinone/menaquinone biosynthesis C-methyltransferase UbiE from Francisella tularensis subsp. holarctica (strain FTNF002-00 / FTA).